The primary structure comprises 149 residues: MTHREELLPPMKWDAWGDPAAAKPLSDGVRSLLKQVVGLADSEQPELDPAQVQLRPSALSGADHDALARIVGTEYFRTADRDRLLHAGGKSTPDLLRRKDTGVQDAPDAVLLPGGPNGGGRRRRHLALLLRPRHCRGPVWWRHQRRWWA.

The polypeptide is Protein Rv2250A (Mycobacterium tuberculosis (strain ATCC 25618 / H37Rv)).